We begin with the raw amino-acid sequence, 1573 residues long: Soluble scavenger receptor cysteine-rich domain-containing protein SSC5D (1573 aa).

The first 16 residues, 1–16, serve as a signal peptide directing secretion; it reads MRVLACLLAALVGIQA. The SRCR 1 domain occupies 20–120; the sequence is LRLADGPHGC…HEEDAGVVCA (101 aa). Disulfide bonds link C45-C109, C58-C119, and C89-C99. A disordered region spans residues 153–192; sequence EPLVTHAPRPAGNPQNASRKKSPRPKQAKSTRAPLLTTGA. N-linked (GlcNAc...) asparagine glycosylation is present at N168. The segment covering 170–181 has biased composition (basic residues); the sequence is SRKKSPRPKQAK. SRCR domains are found at residues 198–298 and 304–404; these read LRLV…LVCT and LRLA…AVCD. 6 disulfide bridges follow: C223/C287, C236/C297, C267/C277, C329/C393, C342/C403, and C373/C383. N-linked (GlcNAc...) asparagine glycosylation is found at N376 and N420. Residues 412-465 are disordered; that stretch reads PPTAPTDSNNSTPREAASRPPSTMTSQAPGTAGVSPPPASPTVLWEPGPEAGSP. Residues 431–440 are compositionally biased toward polar residues; the sequence is PPSTMTSQAP. Residues 467 to 568 enclose the SRCR 4 domain; the sequence is LRLVAGPSKC…HNEDVGVTCT (102 aa). 3 cysteine pairs are disulfide-bonded: C492–C557, C505–C567, and C537–C547. The tract at residues 614-769 is disordered; that stretch reads EKTTTKAPGK…SVSTTGESGL (156 aa). The span at 626-637 shows a compositional bias: basic residues; that stretch reads KSTKKWVTKNAK. Residues 654 to 671 show a composition bias toward polar residues; that stretch reads AQSPPDLTSQTTAALTTE. Over residues 672-685 the composition is skewed to basic and acidic residues; the sequence is ASRRPTSEFTRRPT. Composition is skewed to polar residues over residues 687-702 and 711-735; these read EAPQ…TLTP and KTMA…SIPQ. One can recognise an SRCR 5 domain in the interval 772–872; it reads VRLADGPNRC…HEEDVGLTCT (101 aa). Disulfide bonds link C797–C861, C810–C871, and C841–C851. Disordered regions lie at residues 895 to 1475 and 1554 to 1573; these read KGTT…PCVA and MPAP…RGDV. The segment covering 924–934 has biased composition (basic and acidic residues); it reads RLPDTGSKDGY. 2 stretches are compositionally biased toward pro residues: residues 1004-1020 and 1083-1093; these read PPTP…PPGP and TPEPSPTPLPT. Polar residues predominate over residues 1101-1140; that stretch reads DPSTPSEVTSLSPTSEQVPESDTTPDLDTTPYSSTVSEYS. The span at 1144-1160 shows a compositional bias: pro residues; it reads DPSPSPHPTTTPDPTMA. Low complexity-rich tracts occupy residues 1161 to 1175 and 1185 to 1277; these read PDPI…TPHF and PHPT…MPHP. A compositionally biased stretch (pro residues) spans 1278–1328; it reads TTTPHPTTTPHPTTTPHPTTTPHPTMTPDPTTTPYPTTTPDPTTTPHPTTP. 2 stretches are compositionally biased toward polar residues: residues 1335–1354 and 1364–1380; these read VITT…SPTL and PQLT…TSQI. The segment covering 1381-1401 has biased composition (low complexity); that stretch reads PTLEPSPALESSPSRSSTATS. The segment covering 1464-1475 has biased composition (pro residues); the sequence is GQSPGPHGPCVA.

In terms of assembly, interacts with LGALS1 and laminin. Highly expressed in monocytes/macrophages and T-lymphocytes. Highly expressed in placenta and spleen, and also detected at lower levels in colon, and more weakly in lung, heart and kidney.

The protein resides in the secreted. It localises to the cytoplasm. Binds to extracellular matrix proteins. Binds to pathogen-associated molecular patterns (PAMPs) present on the cell walls of Gram-positive and Gram-negative bacteria and fungi, behaving as a pattern recognition receptor (PRR). Induces bacterial and fungal aggregation and subsequent inhibition of PAMP-induced cytokine release. Does not possess intrinsic bactericidal activity. May play a role in the innate defense and homeostasis of certain epithelial surfaces. The protein is Soluble scavenger receptor cysteine-rich domain-containing protein SSC5D (SSC5D) of Homo sapiens (Human).